Reading from the N-terminus, the 1077-residue chain is Error-prone DNA polymerase (1077 aa).

It belongs to the DNA polymerase type-C family. DnaE2 subfamily.

The protein resides in the cytoplasm. The enzyme catalyses DNA(n) + a 2'-deoxyribonucleoside 5'-triphosphate = DNA(n+1) + diphosphate. DNA polymerase involved in damage-induced mutagenesis and translesion synthesis (TLS). It is not the major replicative DNA polymerase. This Brucella suis biovar 1 (strain 1330) protein is Error-prone DNA polymerase.